The following is a 388-amino-acid chain: Staphopain A (388 aa).

A signal peptide spans 1–25 (MKRNFPKLIALSLIFSLSVTPIANA). Positions 26-214 (ESNSNIKAKD…TSQFKSNNYT (189 aa)) are excised as a propeptide. Active-site residues include Cys238, His334, and Asn355.

Belongs to the peptidase C47 family. As to quaternary structure, in the cytoplasm, prematurely activated/folded ScpA forms a stable non-covalent complex with ScpB. Post-translationally, cleavage leads to the activation of ScpA probably by an auto-catalytic manner.

It localises to the secreted. The enzyme catalyses Broad endopeptidase action on proteins including elastin, but rather limited hydrolysis of small-molecule substrates. Assays are conveniently made with hemoglobin, casein or Z-Phe-Arg-NHMec as substrate.. Its activity is regulated as follows. Prematurely activated/folded staphopain A is inhibited by staphostatin A (ScpB), which is probably required to protect staphylococcal cytoplasmic proteins from degradation by ScpA. Its function is as follows. Cysteine protease that plays an important role in the inhibition of host innate immune response. Cleaves host elastins found in connective tissues, pulmonary surfactant protein A in the lungs, and the chemokine receptor CXCR2 on leukocytes. Proteolytic cleavage of surfactant protein A impairs bacterial phagocytosis by neutrophils while CXCR2 degradation blocks neutrophil activation and chemotaxis. Additionally, promotes vascular leakage by activating the plasma kallikerin/kinin system, resulting in hypotension. The protein is Staphopain A (sspP) of Staphylococcus aureus (strain COL).